A 397-amino-acid chain; its full sequence is Phosphoglycerate kinase (397 aa).

Residues 25-27 (DLN), arginine 41, 64-67 (HLGR), arginine 118, and arginine 151 each bind substrate. ATP-binding positions include lysine 202, glutamate 324, and 350–353 (GGDT).

It belongs to the phosphoglycerate kinase family. Monomer.

It localises to the cytoplasm. It carries out the reaction (2R)-3-phosphoglycerate + ATP = (2R)-3-phospho-glyceroyl phosphate + ADP. It participates in carbohydrate degradation; glycolysis; pyruvate from D-glyceraldehyde 3-phosphate: step 2/5. This chain is Phosphoglycerate kinase, found in Herminiimonas arsenicoxydans.